We begin with the raw amino-acid sequence, 163 residues long: Nucleotide-binding protein BCG9842_B4128 (163 aa).

The protein belongs to the YajQ family.

Its function is as follows. Nucleotide-binding protein. This is Nucleotide-binding protein BCG9842_B4128 from Bacillus cereus (strain G9842).